The sequence spans 290 residues: MGKGLALDIGGTKIAAAVVTESGMLIGRQQIATPRGGAGQLAAALETLIAPYRHQVDFIAVASTGIISGGRLTALNPANLGGLADFPLYDCIRSISDLPCVLLNDGQAAAWAEYQALGDKNDNMMFVTVSTGVGGGIILNKKLLVGQRGLAGHIGHTLSDPHGVLCGCGRRGCVESVASGTAIGAETLGWKQPVSAATVFDMAQQGDAQAGKVINRSAAAIAQMLADMKMALDLEVVILGGSVGLAVGYLERVVAAQKTLPGIYRVPVQEAHHRQDSGLLGAALWARTSL.

ATP is bound by residues 6–13 (ALDIGGTK) and 132–139 (GVGGGIIL). Zn(2+) is bound by residues H156, C166, C168, and C173.

This sequence belongs to the ROK (NagC/XylR) family. NanK subfamily. In terms of assembly, homodimer.

It catalyses the reaction an N-acyl-D-mannosamine + ATP = an N-acyl-D-mannosamine 6-phosphate + ADP + H(+). It functions in the pathway amino-sugar metabolism; N-acetylneuraminate degradation; D-fructose 6-phosphate from N-acetylneuraminate: step 2/5. In terms of biological role, catalyzes the phosphorylation of N-acetylmannosamine (ManNAc) to ManNAc-6-P. This is N-acetylmannosamine kinase from Yersinia pseudotuberculosis serotype O:1b (strain IP 31758).